The following is a 195-amino-acid chain: uncharacterized protein (195 aa).

This is an uncharacterized protein from Schizosaccharomyces pombe (strain 972 / ATCC 24843) (Fission yeast).